Here is a 1327-residue protein sequence, read N- to C-terminus: Kinectin (1327 aa).

Over 1–8 (MELYESTY) the chain is Cytoplasmic. The chain crosses the membrane as a helical; Signal-anchor for type II membrane protein span at residues 9–29 (FIVLIPSVVITVIFLFFWLFM). Residues 30 to 1327 (KETLYDEVLA…EVNQQLTKET (1298 aa)) lie on the Lumenal side of the membrane. 2 disordered regions span residues 49–181 (STKT…EQDK) and 197–216 (LSHQDTKQEGGLGKKKGLSK). N-linked (GlcNAc...) asparagine glycosylation occurs at asparagine 69. 2 stretches are compositionally biased toward basic and acidic residues: residues 73–86 (RESDSEHVPRDFKL) and 111–135 (VRERQKKEKKQKPSLEEQVIKESDA). Serine 75 and serine 77 each carry phosphoserine. The span at 163–173 (LKKKAGQKKSK) shows a compositional bias: basic residues. A coiled-coil region spans residues 329-1327 (ELSGLLHQLQ…EVNQQLTKET (999 aa)). The N-linked (GlcNAc...) asparagine glycan is linked to asparagine 1031. Serine 1060 carries the post-translational modification Phosphoserine. Residue asparagine 1066 is glycosylated (N-linked (GlcNAc...) asparagine). Serine 1290 carries the post-translational modification Phosphoserine.

This sequence belongs to the kinectin family. In terms of tissue distribution, expressed in all tissues examined including 12-day embryo, adult heart, brain, ovary, kidney, lung, small intestine, spleen, thymus and pancreas.

Its subcellular location is the endoplasmic reticulum membrane. Receptor for kinesin thus involved in kinesin-driven vesicle motility. Accumulates in integrin-based adhesion complexes (IAC) upon integrin aggregation by fibronectin. The sequence is that of Kinectin from Mus musculus (Mouse).